The primary structure comprises 154 residues: Homeobox protein engrailed (154 aa).

Positions 37-96 (EKRPRTAFSASQLQRLKQEFQQSNYLTEQRRRSLAKELTLSESQIKIWFQNKRAKIKKAS) form a DNA-binding region, homeobox. A disordered region spans residues 127 to 154 (KLLNGQNTSGDCSRSDYTSDSDGDSLTH). Polar residues predominate over residues 129 to 144 (LNGQNTSGDCSRSDYT). A compositionally biased stretch (acidic residues) spans 145 to 154 (SDSDGDSLTH).

The protein belongs to the engrailed homeobox family.

It localises to the nucleus. The protein is Homeobox protein engrailed (EN) of Tripneustes gratilla (Hawaian sea urchin).